The primary structure comprises 179 residues: Apoptosis regulator Bcl-2 homolog (179 aa).

Residues 76-95 (ELFKDLINWGRICGFIVFSA) carry the BH1 motif. The short motif at 126-141 (PWMISHGGQEEFLAFS) is the BH2 element.

It belongs to the Bcl-2 family. As to quaternary structure, interacts with host BECN1 (via BH3 homology domain); this interaction allows the virus to inhibit BECN1, and thus autophagy. Interacts with host BID. Interacts with host BAX.

The protein resides in the host mitochondrion. Its subcellular location is the host endoplasmic reticulum. Suppresses apoptosis in host cell to promote the viral replication. Has the ability to potentially bind to all the members of the proapoptotic Bcl-2 family. Inhibits autophagy by interacting with host Beclin 1 (BECN1). In African swine fever virus (isolate Tick/South Africa/Pretoriuskop Pr4/1996) (ASFV), this protein is Apoptosis regulator Bcl-2 homolog.